A 108-amino-acid polypeptide reads, in one-letter code: Synaptobrevin-1 (108 aa).

The disordered stretch occupies residues 1 to 25 (MDAQGDAGAQGGSQGPRPSNKRLQQ). The Cytoplasmic portion of the chain corresponds to 1–85 (MDAQGDAGAQ…KRKYWWKNIK (85 aa)). The v-SNARE coiled-coil homology domain occupies 22–82 (RLQQTQAQVD…ATLKRKYWWK (61 aa)). Residues 86–106 (MMIIMCAIVVILIIIIVLWAG) form a helical; Anchor for type IV membrane protein membrane-spanning segment. The Extracellular segment spans residues 107–108 (GK).

This sequence belongs to the synaptobrevin family. As to quaternary structure, part of the SNARE core complex containing CBG09569/SNAP25, snb-1/VAMP2 and CBG03570/STX1A. This complex binds to cpx-1/CPLX1.

The protein localises to the cytoplasmic vesicle. The protein resides in the secretory vesicle. It is found in the synaptic vesicle membrane. Its subcellular location is the cell membrane. It localises to the synapse. The protein localises to the synaptosome. Involved in the targeting and/or fusion of transport vesicles to their target membrane. Acts in neuronal exocytosis of synaptic transmission. Likely to have a role in cholinergic transmisson. Required for viability, coordinated movement and M3 pharynx motor neuron function. This is Synaptobrevin-1 from Caenorhabditis briggsae.